The following is a 193-amino-acid chain: Flagellin B1 (193 aa).

Residues 1 to 12 (MFEFITDEDERG) constitute a propeptide that is removed on maturation.

The protein belongs to the archaeal flagellin family. Glycosylated.

The protein resides in the archaeal flagellum. Functionally, flagellin is the subunit protein which polymerizes to form the filaments of archaeal flagella. This Halobacterium salinarum (strain ATCC 700922 / JCM 11081 / NRC-1) (Halobacterium halobium) protein is Flagellin B1 (flaB1).